The chain runs to 34 residues: Photosystem II reaction center protein M (34 aa).

Residues 5–25 (ILAFIATALFISIPTAFLLIP) traverse the membrane as a helical segment.

The protein belongs to the PsbM family. PSII is composed of 1 copy each of membrane proteins PsbA, PsbB, PsbC, PsbD, PsbE, PsbF, PsbH, PsbI, PsbJ, PsbK, PsbL, PsbM, PsbT, PsbX, PsbY, PsbZ, Psb30/Ycf12, at least 3 peripheral proteins of the oxygen-evolving complex and a large number of cofactors. It forms dimeric complexes.

The protein localises to the plastid. It localises to the chloroplast thylakoid membrane. Functionally, one of the components of the core complex of photosystem II (PSII). PSII is a light-driven water:plastoquinone oxidoreductase that uses light energy to abstract electrons from H(2)O, generating O(2) and a proton gradient subsequently used for ATP formation. It consists of a core antenna complex that captures photons, and an electron transfer chain that converts photonic excitation into a charge separation. This subunit is found at the monomer-monomer interface. The polypeptide is Photosystem II reaction center protein M (Psilotum nudum (Whisk fern)).